The primary structure comprises 190 residues: FMRFamide-related peptides (190 aa).

A signal peptide spans 1-21 (MSCSRTVALLAALWLVVGATS). The propeptide occupies 22-33 (SPVRRSPDLEAR). Phenylalanine 45 is modified (phenylalanine amide). Residues 69–104 (GNSFLRFGRSQPLTLSTDDLVSLLRAYEEDYDTPMT) constitute a propeptide that is removed on maturation. Residue phenylalanine 113 is modified to Phenylalanine amide. A propeptide spanning residues 116 to 150 (DPNFIRLGRSADDDKSAFEQNSELVVSGYPQRKSR) is cleaved from the precursor. Position 158 is a leucine amide (leucine 158). A propeptide spanning residues 160–190 (RDSEEVNENEFEETEESRRKRSADSCHDCQS) is cleaved from the precursor. The segment at 161-190 (DSEEVNENEFEETEESRRKRSADSCHDCQS) is disordered. A compositionally biased stretch (acidic residues) spans 164–174 (EVNENEFEETE). Over residues 175 to 190 (ESRRKRSADSCHDCQS) the composition is skewed to basic and acidic residues.

It belongs to the FARP (FMRFamide related peptide) family. In terms of tissue distribution, RFamide 1: Expressed in corpora cardiaca (CC), corpora allata (CA), antennal lobe (AL) and gnathal ganglion (GNG) (at protein level). Expression in AL detected in most animals, in CC, CA and in GNG in some animals (at protein level). RFamide precursor-related peptide 2: Expressed in corpora cardiaca (CC), corpora allata (CA), antennal lobe (AL) and gnathal ganglion (GNG) (at protein level). Expression in AL detected in some animals, expression in CC, CA and GNG in few animals (at protein level). RFamide 3: Expressed in corpora cardiaca (CC), corpora allata (CA), antennal lobe (AL) and gnathal ganglion (GNG) (at protein level). Expression in AL detected in all animals, in CC, CA and GNG in most animals (at protein level). RFamide 5: Expressed in corpora cardiaca (CC), corpora allata (CA), antennal lobe (AL) and gnathal ganglion (GNG) (at protein level). Expression in AL detected in all animals, in CC, CA and in GNG in some animals (at protein level).

Its subcellular location is the secreted. In terms of biological role, in insects, FMRFamide and related peptides have modulatory actions at skeletal neuromuscular junctions, and peptides that are immunologically related to FMRFamide are released into the circulation from neurohemal organs. The chain is FMRFamide-related peptides from Agrotis ipsilon (Black cutworm moth).